The chain runs to 178 residues: Extracellular fatty acid-binding protein (178 aa).

The first 20 residues, 1-20 (MRTLALSLGLALLCLLHAKA), serve as a signal peptide directing secretion. An enterobactin-binding site is contributed by Thr-43. The 1-tetradecanoyl-sn-glycerol 3-phosphate site is built by Tyr-72 and Lys-104. Cys-80 and Cys-173 form a disulfide bridge. Enterobactin contacts are provided by Lys-104, Arg-123, and Arg-134. 1-tetradecanoyl-sn-glycerol 3-phosphate is bound at residue 134-136 (RLY).

It belongs to the calycin superfamily. Lipocalin family. Monomer.

The protein resides in the secreted. Functionally, siderocalin-like lipocalin tightly binding a variety of bacterial ferric siderophores, also binds long-chain unsaturated fatty acids such as linoleic acid, oleic acid, arachidonic acid and, with a lower affinity, long chain saturated fatty acids such as steraic acid. May act as an antibacterial factor, through dual ligand specificity, both as a siderophore-sequestrating molecule and a lysophosphatidic acid (LPA) sensor. The sequence is that of Extracellular fatty acid-binding protein from Coturnix japonica (Japanese quail).